The following is a 471-amino-acid chain: 5-hydroxytryptamine receptor 2A (471 aa).

Residues M1–L80 lie on the Extracellular side of the membrane. Residues N8, N38, N44, N51, and N54 are each glycosylated (N-linked (GlcNAc...) asparagine). A helical transmembrane segment spans residues T81–M97. Topologically, residues A98–Y111 are cytoplasmic. A helical transmembrane segment spans residues F112–Y137. The Extracellular portion of the chain corresponds to G138–K146. Residues L147–L171 traverse the membrane as a helical segment. A disulfide bridge connects residues C148 and C227. D155 is a binding site for serotonin. The DRY motif; important for ligand-induced conformation changes signature appears at D172 to Y174. The Cytoplasmic portion of the chain corresponds to D172–K191. The chain crosses the membrane as a helical span at residues A192–L215. The Extracellular segment spans residues Q216 to D232. A helical transmembrane segment spans residues N233–I258. At K259–C322 the chain is on the cytoplasmic side. Residue S280 is modified to Phosphoserine. The helical transmembrane segment at K323–I348 threads the bilayer. A serotonin-binding site is contributed by N343. C349 and C353 form a disulfide bridge. Residues C349–D356 are Extracellular-facing. The helical transmembrane segment at V357–L382 threads the bilayer. The short motif at N376 to Y380 is the NPxxY motif; important for ligand-induced conformation changes and signaling element. The Cytoplasmic segment spans residues F383 to V471. Positions Q451–N465 are enriched in basic and acidic residues. Residues Q451–V471 form a disordered region. Residues S469–V471 carry the PDZ-binding motif.

It belongs to the G-protein coupled receptor 1 family. Interacts (via C-terminus) with MPDZ and PATJ. May interact (via C-terminus) with MPP3, PRDX6, DLG4, DLG1, CASK, APBA1 and MAGI2. Interacts with GRM2 and DRD2; this may affect signaling. As to expression, detected in brain cortex (at protein level). Detected in blood platelets.

Its subcellular location is the cell membrane. It localises to the cell projection. It is found in the dendrite. The protein localises to the axon. The protein resides in the cytoplasmic vesicle. Its subcellular location is the membrane. It localises to the caveola. It is found in the presynapse. Its activity is regulated as follows. G-protein coupled receptor activity is regulated by lipids: oleamide increases HTR2A-mediated activity. Inhibited by IHCH-7179 small molecule: IHCH-7179 acts both as an agonist activator for HTR1A and as an antagonist inhibitor for HTR2A. Its function is as follows. G-protein coupled receptor for 5-hydroxytryptamine (serotonin). Also functions as a receptor for various drugs and psychoactive substances, including mescaline, psilocybin, 1-(2,5-dimethoxy-4-iodophenyl)-2-aminopropane (DOI) and lysergic acid diethylamide (LSD). Ligand binding causes a conformation change that triggers signaling via guanine nucleotide-binding proteins (G proteins) and modulates the activity of downstream effectors. HTR2A is coupled to G(q)/G(11) G alpha proteins and activates phospholipase C-beta, releasing diacylglycerol (DAG) and inositol 1,4,5-trisphosphate (IP3) second messengers that modulate the activity of phosphatidylinositol 3-kinase and promote the release of Ca(2+) ions from intracellular stores, respectively. Beta-arrestin family members inhibit signaling via G proteins and mediate activation of alternative signaling pathways. Affects neural activity, perception, cognition and mood. Plays a role in the regulation of behavior, including responses to anxiogenic situations and psychoactive substances. Plays a role in intestinal smooth muscle contraction, and may play a role in arterial vasoconstriction. (Microbial infection) Acts as a receptor for human JC polyomavirus/JCPyV. The protein is 5-hydroxytryptamine receptor 2A of Homo sapiens (Human).